A 154-amino-acid polypeptide reads, in one-letter code: Superoxide dismutase [Cu-Zn] (154 aa).

Positions 47, 49, and 64 each coordinate Cu cation. A disulfide bond links Cys58 and Cys147. Zn(2+) contacts are provided by His64, His72, His81, and Asp84. His121 is a Cu cation binding site. Position 144 (Arg144) interacts with substrate.

It belongs to the Cu-Zn superoxide dismutase family. In terms of assembly, homodimer. Cu cation serves as cofactor. It depends on Zn(2+) as a cofactor.

It localises to the cytoplasm. The protein localises to the mitochondrion. It is found in the cell membrane. The catalysed reaction is 2 superoxide + 2 H(+) = H2O2 + O2. In terms of biological role, destroys radicals which are normally produced within the cells and which are toxic to biological systems. Destroys radicals produced by host defense mechanisms. In Cryptococcus neoformans var. grubii serotype A (strain H99 / ATCC 208821 / CBS 10515 / FGSC 9487) (Filobasidiella neoformans var. grubii), this protein is Superoxide dismutase [Cu-Zn].